The following is a 188-amino-acid chain: Phosphatidylinositol N-acetylglucosaminyltransferase subunit H (188 aa).

It belongs to the PIGH family. Component of the glycosylphosphatidylinositol-N-acetylglucosaminyltransferase (GPI-GnT) complex composed at least by PIGA, PIGC, PIGH, PIGP, PIGQ, PIGY and DPM2. Interacts with PIGQ.

The protein resides in the cytoplasm. Its pathway is glycolipid biosynthesis; glycosylphosphatidylinositol-anchor biosynthesis. Part of the glycosylphosphatidylinositol-N-acetylglucosaminyltransferase (GPI-GnT) complex that catalyzes the transfer of N-acetylglucosamine from UDP-N-acetylglucosamine to phosphatidylinositol and participates in the first step of GPI biosynthesis. This Bos taurus (Bovine) protein is Phosphatidylinositol N-acetylglucosaminyltransferase subunit H.